We begin with the raw amino-acid sequence, 440 residues long: Chromosome partition protein MukF (440 aa).

The tract at residues 208 to 236 (LSETSGTLRELQDTLEAAGDKLQANLLRI) is leucine-zipper.

The protein belongs to the MukF family. Interacts, and probably forms a ternary complex, with MukE and MukB via its C-terminal region. The complex formation is stimulated by calcium or magnesium. It is required for an interaction between MukE and MukB.

The protein resides in the cytoplasm. It is found in the nucleoid. Its function is as follows. Involved in chromosome condensation, segregation and cell cycle progression. May participate in facilitating chromosome segregation by condensation DNA from both sides of a centrally located replisome during cell division. Not required for mini-F plasmid partitioning. Probably acts via its interaction with MukB and MukE. Overexpression results in anucleate cells. It has a calcium binding activity. The sequence is that of Chromosome partition protein MukF from Escherichia coli O9:H4 (strain HS).